We begin with the raw amino-acid sequence, 235 residues long: Phosphoribosylaminoimidazole-succinocarboxamide synthase (235 aa).

The protein belongs to the SAICAR synthetase family.

It carries out the reaction 5-amino-1-(5-phospho-D-ribosyl)imidazole-4-carboxylate + L-aspartate + ATP = (2S)-2-[5-amino-1-(5-phospho-beta-D-ribosyl)imidazole-4-carboxamido]succinate + ADP + phosphate + 2 H(+). The protein operates within purine metabolism; IMP biosynthesis via de novo pathway; 5-amino-1-(5-phospho-D-ribosyl)imidazole-4-carboxamide from 5-amino-1-(5-phospho-D-ribosyl)imidazole-4-carboxylate: step 1/2. In Chlorobaculum tepidum (strain ATCC 49652 / DSM 12025 / NBRC 103806 / TLS) (Chlorobium tepidum), this protein is Phosphoribosylaminoimidazole-succinocarboxamide synthase.